A 360-amino-acid polypeptide reads, in one-letter code: Venom serine protease Bi-VSP (360 aa).

Positions 1 to 26 (MTGSKMLFACLALIAFLHPLVHVASA) are cleaved as a signal peptide. Residues 27 to 113 (QECTTPNNKA…CGFSNVSHTR (87 aa)) constitute a propeptide that is removed on maturation. Residues 28–79 (ECTTPNNKAGKCLGIRVCKPLLEMLQTQGHAAADFLRQSVCKYENNNPIVCC) enclose the Clip domain. Intrachain disulfides connect cysteine 29–cysteine 78, cysteine 39–cysteine 68, cysteine 45–cysteine 79, cysteine 104–cysteine 230, cysteine 147–cysteine 163, cysteine 278–cysteine 296, and cysteine 307–cysteine 335. Asparagine 108 carries an N-linked (GlcNAc...) asparagine glycan. In terms of domain architecture, Peptidase S1 spans 114-360 (VVGGKPAVLG…LDDFILPAMQ (247 aa)). Histidine 162 acts as the Charge relay system in catalysis. Aspartate 176, asparagine 178, arginine 181, and aspartate 184 together coordinate Ca(2+). Aspartate 210 acts as the Charge relay system in catalysis. The active-site Charge relay system is serine 311.

This sequence belongs to the peptidase S1 family. CLIP subfamily. Expressed by the venom gland.

It localises to the secreted. Its function is as follows. Multifunctional venom serine protease. In insects, it acts as an arthropod prophenoloxidase-activating factor, thereby triggering the phenoloxidase cascade. When injected into larvae, it induces a lethal melanization response in target insects by modulating the innate immune response. In mammals, it converts fibrinogen into fibrin, activates prothrombin, and also degrades fibrin. In mammal, it may act in a cooperative manner with the serine protease inhibitor Bi-KTI (AC G3LH89) to promote the spread of bee venom under anti-bleeding conditions. This chain is Venom serine protease Bi-VSP, found in Bombus ignitus (Bumblebee).